Reading from the N-terminus, the 106-residue chain is Large ribosomal subunit protein eL42 (106 aa).

The protein belongs to the eukaryotic ribosomal protein eL42 family.

The sequence is that of Large ribosomal subunit protein eL42 (RPL44) from Debaryomyces hansenii (strain ATCC 36239 / CBS 767 / BCRC 21394 / JCM 1990 / NBRC 0083 / IGC 2968) (Yeast).